A 370-amino-acid polypeptide reads, in one-letter code: Peptide chain release factor 2 (370 aa).

The residue at position 249 (glutamine 249) is an N5-methylglutamine.

The protein belongs to the prokaryotic/mitochondrial release factor family. Methylated by PrmC. Methylation increases the termination efficiency of RF2.

It is found in the cytoplasm. Peptide chain release factor 2 directs the termination of translation in response to the peptide chain termination codons UGA and UAA. The protein is Peptide chain release factor 2 of Kosmotoga olearia (strain ATCC BAA-1733 / DSM 21960 / TBF 19.5.1).